Consider the following 326-residue polypeptide: Putative HTH-type transcriptional regulatory protein MmarC7_1702 (326 aa).

Positions 128–183 (LRETREKLKISVGELAEISRVSRKTIYKYEQNEANPSAEVAIKIEEYLDVPLIKGI) constitute an HTH cro/C1-type domain. The segment at residues 139 to 158 (VGELAEISRVSRKTIYKYEQ) is a DNA-binding region (H-T-H motif).

The chain is Putative HTH-type transcriptional regulatory protein MmarC7_1702 from Methanococcus maripaludis (strain C7 / ATCC BAA-1331).